The sequence spans 212 residues: Deoxyribose-phosphate aldolase (212 aa).

The Proton donor/acceptor role is filled by Asp-89. The active-site Schiff-base intermediate with acetaldehyde is the Lys-151. The active-site Proton donor/acceptor is the Lys-180.

Belongs to the DeoC/FbaB aldolase family. DeoC type 1 subfamily.

The protein localises to the cytoplasm. It carries out the reaction 2-deoxy-D-ribose 5-phosphate = D-glyceraldehyde 3-phosphate + acetaldehyde. The protein operates within carbohydrate degradation; 2-deoxy-D-ribose 1-phosphate degradation; D-glyceraldehyde 3-phosphate and acetaldehyde from 2-deoxy-alpha-D-ribose 1-phosphate: step 2/2. Functionally, catalyzes a reversible aldol reaction between acetaldehyde and D-glyceraldehyde 3-phosphate to generate 2-deoxy-D-ribose 5-phosphate. The chain is Deoxyribose-phosphate aldolase from Clostridium botulinum (strain ATCC 19397 / Type A).